The following is an 853-amino-acid chain: DNA mismatch repair protein MutS (853 aa).

614–621 lines the ATP pocket; the sequence is GPNMGGKS.

It belongs to the DNA mismatch repair MutS family.

Functionally, this protein is involved in the repair of mismatches in DNA. It is possible that it carries out the mismatch recognition step. This protein has a weak ATPase activity. In Citrobacter koseri (strain ATCC BAA-895 / CDC 4225-83 / SGSC4696), this protein is DNA mismatch repair protein MutS.